The chain runs to 494 residues: MVKEIDINKLLAQENNALNAILSHVNELCKQNKQLQGLIEIQNETKELEKEHNRSLPWFKRFVKTVSNVKYILIKSEEQLTNEAIKYNNKILKDIDNKIYNIAEKSAPLKQALQEEIEKSFKDLTKKDLSKDQRARLSEVFFSYKSKPERFSALHMTNPLQFINAEALEKQFNSLNATKQNIQNLISENSNIKELKEIQKQVAEIRAEVPHTFFEKLNNIWQNVKNVFVNNSEQVLAKNKESNTRTIRKIDEQLYKTQHKFEELIENKERNIKDIIAKLPDNEELQKIVSNLTNHMASKKEPILANVSLAKPLENNIPPPPPPPPPLPDNNIPPPPPPPPPLPDNNIPPPPPPPPMAPVKTLSKAVEATTVKKLENQPRPSIDTSDLMREIAGPKKLKKVEFDPNTGKPVAHSHSKPAQNVNKPSGLESIFARRVAIEMSDSSSSESDSGNWSDVSVNRNKSKMLKTKGERDAKMTTHAQKINNRNSQKPSFVR.

Residues 312–494 are disordered; that stretch reads PLENNIPPPP…RNSQKPSFVR (183 aa). Residues 317–357 are compositionally biased toward pro residues; sequence IPPPPPPPPPLPDNNIPPPPPPPPPLPDNNIPPPPPPPPMA. The WH2 domain occupies 383–400; it reads DTSDLMREIAGPKKLKKV. Residues 421 to 454 form a central and acidic domains region; it reads VNKPSGLESIFARRVAIEMSDSSSSESDSGNWSD. Over residues 440 to 456 the composition is skewed to low complexity; that stretch reads SDSSSSESDSGNWSDVS. A compositionally biased stretch (polar residues) spans 477–494; the sequence is THAQKINNRNSQKPSFVR.

The protein localises to the cell surface. Its function is as follows. Recruits and activates the Arp2/3 complex, which in turn leads to actin polymerization, promoting Rickettsia motility during infection. The protein is Arp2/3 complex-activating protein rickA (rickA) of Rickettsia rickettsii.